Here is a 187-residue protein sequence, read N- to C-terminus: Elongation factor P (187 aa).

This sequence belongs to the elongation factor P family.

The protein resides in the cytoplasm. The protein operates within protein biosynthesis; polypeptide chain elongation. In terms of biological role, involved in peptide bond synthesis. Stimulates efficient translation and peptide-bond synthesis on native or reconstituted 70S ribosomes in vitro. Probably functions indirectly by altering the affinity of the ribosome for aminoacyl-tRNA, thus increasing their reactivity as acceptors for peptidyl transferase. The chain is Elongation factor P (efp) from Synechocystis sp. (strain ATCC 27184 / PCC 6803 / Kazusa).